The sequence spans 79 residues: Dolichyl-diphosphooligosaccharide--protein glycosyltransferase subunit TMEM258 (79 aa).

2 consecutive transmembrane segments (helical) span residues 17 to 37 (VFPHLTVVLLAIGMFFTAWFF) and 55 to 75 (LISLVASLFMGFGVLFLLLWV).

It belongs to the OST5 family. In terms of assembly, component of the oligosaccharyltransferase (OST) complex.

The protein localises to the membrane. It localises to the endoplasmic reticulum. Its subcellular location is the cytoplasm. It participates in protein modification; protein glycosylation. Subunit of the oligosaccharyl transferase (OST) complex that catalyzes the initial transfer of a defined glycan (Glc(3)Man(9)GlcNAc(2) in eukaryotes) from the lipid carrier dolichol-pyrophosphate to an asparagine residue within an Asn-X-Ser/Thr consensus motif in nascent polypeptide chains, the first step in protein N-glycosylation. N-glycosylation occurs cotranslationally and the complex associates with the Sec61 complex at the channel-forming translocon complex that mediates protein translocation across the endoplasmic reticulum (ER). All subunits are required for a maximal enzyme activity. The protein is Dolichyl-diphosphooligosaccharide--protein glycosyltransferase subunit TMEM258 of Xenopus laevis (African clawed frog).